A 410-amino-acid chain; its full sequence is MVRNSEITLEQIFKEGRINLENDDYNCVICSFPLFDGLQCKRGHGACKSCWEKIIGENGKKECHSCRISIKSLDDLSKNLYLEKEIFKQKVACLNNGREKFGNTLVIKSDGGCKRQDIPIEKLLHHIKNECGYLLIDCKYSRDCKYYKQISLEQHQNECQFMSIHCPALCGKKDSRMNINKHLETPNSCKPLISINNSNNSNGNGNGIDDESIIKLSNSIVEIQKSYQNQIKKIKENSESEIAALKDSLYYSKSRIKNLEDEVEELKDRFSTLESMINKLDDSATSRSGTILINGWKMKLKSLDVGHSIVEEQFYIGTNRFYIRIYPFGDSYDNQGYVTVKLGRIDGEEYHLDIGLKVSIKGFDNKKKVLLSYYPGDIAHNIDQLVETWETSKEFKMILHFKVDLKPKIK.

Residues 27–67 (CVICSFPLFDGLQCKRGHGACKSCWEKIIGENGKKECHSCR) form an RING-type; degenerate zinc finger. 2 TRAF-type zinc fingers span residues 81–154 (YLEK…SLEQ) and 154–213 (QHQN…DESI). The stretch at 216 to 284 (LSNSIVEIQK…SMINKLDDSA (69 aa)) forms a coiled coil.

Belongs to the TNF receptor-associated factor family.

It localises to the cytoplasm. In terms of biological role, probable adapter protein and signal transducer that links members of the tumor necrosis factor receptor family to different signaling pathways by association with the receptor cytoplasmic domain and kinases. The protein is TNF receptor-associated factor family protein DDB_G0279745 of Dictyostelium discoideum (Social amoeba).